The sequence spans 433 residues: Serine/threonine-protein kinase Sgk1 (433 aa).

The segment at 66–92 (QDVELMNSNPSPPPSPSQQINLGPSSN) is disordered. Over residues 83 to 92 (QQINLGPSSN) the composition is skewed to polar residues. Residues 100 to 357 (FDFLKVIGKG…FTEIKNHMFF (258 aa)) enclose the Protein kinase domain. ATP-binding positions include 106–114 (IGKGSFGKV) and Lys-129. Asp-224 acts as the Proton acceptor in catalysis. An AGC-kinase C-terminal domain is found at 358 to 433 (SPINWDDLNA…SYAPAMDSYL (76 aa)).

It belongs to the protein kinase superfamily. AGC Ser/Thr protein kinase family.

The protein resides in the cytoplasm. The protein localises to the nucleus. It localises to the endoplasmic reticulum. It catalyses the reaction L-seryl-[protein] + ATP = O-phospho-L-seryl-[protein] + ADP + H(+). It carries out the reaction L-threonyl-[protein] + ATP = O-phospho-L-threonyl-[protein] + ADP + H(+). Its function is as follows. Protein kinase that may play an important role in cellular stress response. May be involved in the regulation of processes such as cell survival, neuronal excitability and renal sodium excretion. The chain is Serine/threonine-protein kinase Sgk1 (sgk1) from Danio rerio (Zebrafish).